A 311-amino-acid polypeptide reads, in one-letter code: Ribosomal protein L11 methyltransferase (311 aa).

The S-adenosyl-L-methionine site is built by Thr160, Gly181, Asp203, and Asn246.

Belongs to the methyltransferase superfamily. PrmA family.

Its subcellular location is the cytoplasm. It catalyses the reaction L-lysyl-[protein] + 3 S-adenosyl-L-methionine = N(6),N(6),N(6)-trimethyl-L-lysyl-[protein] + 3 S-adenosyl-L-homocysteine + 3 H(+). Methylates ribosomal protein L11. The polypeptide is Ribosomal protein L11 methyltransferase (Macrococcus caseolyticus (strain JCSC5402) (Macrococcoides caseolyticum)).